Consider the following 358-residue polypeptide: Adenosine deaminase (358 aa).

Residues His-14 and His-16 each coordinate Zn(2+). His-16, Asp-18, and Gly-183 together coordinate substrate. His-212 lines the Zn(2+) pocket. The active-site Proton donor is the Glu-215. Asp-294 serves as a coordination point for Zn(2+). A substrate-binding site is contributed by Asp-295.

This sequence belongs to the metallo-dependent hydrolases superfamily. Adenosine and AMP deaminases family. Zn(2+) is required as a cofactor.

Its subcellular location is the cell membrane. The protein localises to the cell junction. It is found in the cytoplasmic vesicle lumen. The protein resides in the cytoplasm. It localises to the lysosome. It catalyses the reaction adenosine + H2O + H(+) = inosine + NH4(+). The catalysed reaction is 2'-deoxyadenosine + H2O + H(+) = 2'-deoxyinosine + NH4(+). Functionally, catalyzes the hydrolytic deamination of adenosine and 2-deoxyadenosine. Plays an important role in purine metabolism and in adenosine homeostasis. Modulates signaling by extracellular adenosine, and so contributes indirectly to cellular signaling events. May act as a positive regulator of T-cell coactivation. The protein is Adenosine deaminase (ada) of Xenopus laevis (African clawed frog).